The chain runs to 640 residues: Tyrosine--tRNA ligase, mitochondrial (640 aa).

Position 100 (Tyr-100) interacts with L-tyrosine. ATP is bound at residue Asp-104. Residues 105–114 (PTAPSLHIGH) carry the 'HIGH' region motif. L-tyrosine contacts are provided by Asp-144, Tyr-248, Gln-252, Asp-255, and Gln-274. A 'KMSKS' region motif is present at residues 322–326 (KFGKS). Lys-325 lines the ATP pocket.

Belongs to the class-I aminoacyl-tRNA synthetase family.

It is found in the mitochondrion matrix. It carries out the reaction tRNA(Tyr) + L-tyrosine + ATP = L-tyrosyl-tRNA(Tyr) + AMP + diphosphate + H(+). Functionally, has both an aminoacyl-tRNA synthetase activity and is involved in the splicing of group I introns. In Podospora anserina (Pleurage anserina), this protein is Tyrosine--tRNA ligase, mitochondrial (YTS1).